The primary structure comprises 119 residues: Ribosome-binding factor A (119 aa).

Belongs to the RbfA family. As to quaternary structure, monomer. Binds 30S ribosomal subunits, but not 50S ribosomal subunits or 70S ribosomes.

The protein resides in the cytoplasm. Functionally, one of several proteins that assist in the late maturation steps of the functional core of the 30S ribosomal subunit. Associates with free 30S ribosomal subunits (but not with 30S subunits that are part of 70S ribosomes or polysomes). Required for efficient processing of 16S rRNA. May interact with the 5'-terminal helix region of 16S rRNA. The chain is Ribosome-binding factor A from Citrifermentans bemidjiense (strain ATCC BAA-1014 / DSM 16622 / JCM 12645 / Bem) (Geobacter bemidjiensis).